A 734-amino-acid chain; its full sequence is Photosystem I P700 chlorophyll a apoprotein A2 (734 aa).

Helical transmembrane passes span 46–69, 135–158, 175–199, 273–291, 330–353, 369–395, 417–439, and 517–535; these read IFAS…FHVA, LYTG…LHLQ, LNHH…HVAI, MAHH…GHMY, LHFQ…QHMY, AALY…IFFI, AIIS…LYVH, and FLVH…LILV. Residues cysteine 559 and cysteine 568 each coordinate [4Fe-4S] cluster. 2 helical membrane passes run 575 to 596 and 643 to 665; these read AFYL…YWHW and LSVW…MFLI. The chlorophyll a site is built by histidine 654, methionine 662, and tyrosine 670. Tryptophan 671 contributes to the phylloquinone binding site. The chain crosses the membrane as a helical span at residues 707–727; it reads LVGLAHFSVGYIFTYAAFLIA.

It belongs to the PsaA/PsaB family. As to quaternary structure, the PsaA/B heterodimer binds the P700 chlorophyll special pair and subsequent electron acceptors. PSI consists of a core antenna complex that captures photons, and an electron transfer chain that converts photonic excitation into a charge separation. The eukaryotic PSI reaction center is composed of at least 11 subunits. P700 is a chlorophyll a/chlorophyll a' dimer, A0 is one or more chlorophyll a, A1 is one or both phylloquinones and FX is a shared 4Fe-4S iron-sulfur center. serves as cofactor.

It is found in the plastid. The protein localises to the chloroplast thylakoid membrane. The catalysed reaction is reduced [plastocyanin] + hnu + oxidized [2Fe-2S]-[ferredoxin] = oxidized [plastocyanin] + reduced [2Fe-2S]-[ferredoxin]. Functionally, psaA and PsaB bind P700, the primary electron donor of photosystem I (PSI), as well as the electron acceptors A0, A1 and FX. PSI is a plastocyanin-ferredoxin oxidoreductase, converting photonic excitation into a charge separation, which transfers an electron from the donor P700 chlorophyll pair to the spectroscopically characterized acceptors A0, A1, FX, FA and FB in turn. Oxidized P700 is reduced on the lumenal side of the thylakoid membrane by plastocyanin. The sequence is that of Photosystem I P700 chlorophyll a apoprotein A2 from Cucumis sativus (Cucumber).